The following is a 255-amino-acid chain: 2-dehydro-3,6-dideoxy-6-sulfogluconate aldolase (255 aa).

The Proton acceptor role is filled by H38. A divalent metal cation-binding residues include E141 and D167.

Belongs to the HpcH/HpaI aldolase family. Homohexamer; trimer of dimers. A divalent metal cation is required as a cofactor.

It carries out the reaction 2-dehydro-3,6-dideoxy-6-sulfo-D-gluconate = (2S)-3-sulfolactaldehyde + pyruvate. In terms of biological role, catalyzes the retro-aldol cleavage of 2-dehydro-3,6-dideoxy-6-sulfo-D-gluconate to (2S)-3-sulfolactaldehyde and pyruvate. Is involved in a degradation pathway of sulfoquinovose (SQ) that allows P.putida SQ1 to use SQ as the sole carbon and energy source for growth. This Pseudomonas putida (Arthrobacter siderocapsulatus) protein is 2-dehydro-3,6-dideoxy-6-sulfogluconate aldolase.